The following is a 223-amino-acid chain: Urease accessory protein UreF (223 aa).

This sequence belongs to the UreF family. As to quaternary structure, ureD, UreF and UreG form a complex that acts as a GTP-hydrolysis-dependent molecular chaperone, activating the urease apoprotein by helping to assemble the nickel containing metallocenter of UreC. The UreE protein probably delivers the nickel.

Its subcellular location is the cytoplasm. Functionally, required for maturation of urease via the functional incorporation of the urease nickel metallocenter. This Mesorhizobium japonicum (strain LMG 29417 / CECT 9101 / MAFF 303099) (Mesorhizobium loti (strain MAFF 303099)) protein is Urease accessory protein UreF.